Consider the following 158-residue polypeptide: C-type lectin galactose-binding isoform (158 aa).

The N-terminal stretch at methionine 1–serine 23 is a signal peptide. 3 disulfides stabilise this stretch: cysteine 26/cysteine 37, cysteine 54/cysteine 154, and cysteine 129/cysteine 146. The region spanning arginine 33–glutamine 155 is the C-type lectin domain. Ca(2+) contacts are provided by glutamine 119, aspartate 121, and glutamate 127. The short motif at glutamine 119–aspartate 121 is the Galactose-binding element. Asparagine 134 is a glycosylation site (N-linked (GlcNAc...) asparagine). The Ca(2+) site is built by asparagine 142 and aspartate 143.

It belongs to the true venom lectin family. As to quaternary structure, homodimer; disulfide-linked. In terms of tissue distribution, expressed by the venom gland.

The protein localises to the secreted. Functionally, galactose-binding lectin that binds to and agglutinates erythrocytes in a calcium-dependent manner. This chain is C-type lectin galactose-binding isoform, found in Pseudechis porphyriacus (Red-bellied black snake).